The primary structure comprises 607 residues: Elongation factor 4 (607 aa).

Positions 11–193 (GKIRNFSIIA…QIVEKVPAPT (183 aa)) constitute a tr-type G domain. Residues 23 to 28 (DHGKST) and 140 to 143 (NKID) each bind GTP.

This sequence belongs to the TRAFAC class translation factor GTPase superfamily. Classic translation factor GTPase family. LepA subfamily.

The protein localises to the cell membrane. The enzyme catalyses GTP + H2O = GDP + phosphate + H(+). Required for accurate and efficient protein synthesis under certain stress conditions. May act as a fidelity factor of the translation reaction, by catalyzing a one-codon backward translocation of tRNAs on improperly translocated ribosomes. Back-translocation proceeds from a post-translocation (POST) complex to a pre-translocation (PRE) complex, thus giving elongation factor G a second chance to translocate the tRNAs correctly. Binds to ribosomes in a GTP-dependent manner. The sequence is that of Elongation factor 4 from Streptococcus pneumoniae (strain JJA).